The primary structure comprises 222 residues: Thiopurine S-methyltransferase (222 aa).

Residues Trp10, Leu45, Glu66, and Arg126 each coordinate S-adenosyl-L-methionine.

This sequence belongs to the class I-like SAM-binding methyltransferase superfamily. TPMT family.

It localises to the cytoplasm. It carries out the reaction S-adenosyl-L-methionine + a thiopurine = S-adenosyl-L-homocysteine + a thiopurine S-methylether.. The polypeptide is Thiopurine S-methyltransferase (Shewanella piezotolerans (strain WP3 / JCM 13877)).